The primary structure comprises 112 residues: uncharacterized protein (112 aa).

N-linked (GlcNAc...) asparagine; by host glycans are attached at residues N29 and N60. The helical transmembrane segment at 66 to 86 (IFNGLGFILIVIFIYLLLITL) threads the bilayer.

Belongs to the asfivirus B117L family.

The protein localises to the host membrane. Its subcellular location is the virion. This is an uncharacterized protein from African swine fever virus (isolate Tick/South Africa/Pretoriuskop Pr4/1996) (ASFV).